Reading from the N-terminus, the 706-residue chain is MVSATNTVNSGVPPNPAASIQAERAASKFDPKEMHYFLEGGEERAEKFKQMMQQMERDPILSANFQYYDLTKDQQRELTALRIDRLTRYIENESFDDFNKRMSLMGVFDPQLSTRLGINLGLFVSCLKGNGTAEQVKYWAMDKSAVYMRGIYGCFGMTELAHGSNVAGLETTATFDDENDEFIINTPHIGATKWWIGGAAHSATHCSVYARLIVGGQDYGVKTFVVPLRDSNHDTMPGVTVGDIGAKMGRDGIDNGWIQFSNVRIPRYFMLQKFCKVSSEGDVQLPPLEQLSYSALLGGRVMMVLDSFRVSARFSTVALRYAIGRRQFKAGSASDDKNALECQLLDYPLHQRRLLPYLALSYIISASAVKIETTIESTLENLDKAVEADDMGAIMKSIDSMKSLFVDSGSLKSTCTWLAAEVIDQCRQACGGHGYSAYSGFGKAYNDWVVMCTWEGDNNVLAMSVGKQIIKHILGVLDGKKVKGSADFLNNTEQYLNEEPVLRSVDDLKDLKKVLLAIEVAIIRVAYQASQTLKENKGDFDTVGAEMVTLSKLNAHHFMLSEFLDRMDSFESKQLVPYLESVAKLYSATIVLEKFAGDFLAQGVFPPKLNGELNSKHIPELCKEIRPNVIALTDSFQQSDMMINSAIGSYDGNIYENYFGVVKANNPPSKTKAPYSGALEAMLNRPSKEERERFEKSTETAKILSK.

The disordered stretch occupies residues 682-706 (MLNRPSKEERERFEKSTETAKILSK). Positions 686–699 (PSKEERERFEKSTE) are enriched in basic and acidic residues.

The protein belongs to the acyl-CoA oxidase family. The cofactor is FAD.

It localises to the peroxisome. It carries out the reaction a 2,3-saturated acyl-CoA + O2 = a (2E)-enoyl-CoA + H2O2. It functions in the pathway lipid metabolism; peroxisomal fatty acid beta-oxidation. This Debaryomyces hansenii (strain ATCC 36239 / CBS 767 / BCRC 21394 / JCM 1990 / NBRC 0083 / IGC 2968) (Yeast) protein is Acyl-coenzyme A oxidase (POX1).